A 397-amino-acid polypeptide reads, in one-letter code: P-selectin glycoprotein ligand 1 (397 aa).

The signal sequence occupies residues 1 to 17; sequence MSPSFLVLLTILGPGNS. The propeptide occupies 18–41; that stretch reads LQLQDPWGHETKEAPGPVHLRERR. Residues 18-307 are Extracellular-facing; sequence LQLQDPWGHE…SSDLIPVKQC (290 aa). Position 54 is a sulfotyrosine (Y54). T58 carries an O-linked (GalNAc...) threonine glycan. N-linked (GlcNAc...) asparagine glycosylation is present at N66. Residues 89–261 are disordered; sequence TSAGTSERAT…TMETASTESN (173 aa). A compositionally biased stretch (polar residues) spans 120–198; sequence STDSATQWSL…PMEAETSQPA (79 aa). 10 tandem repeats follow at residues 126-135, 136-145, 146-155, 156-165, 166-175, 176-185, 186-195, 196-205, 206-215, and 216-225. The segment at 126–225 is 10 X 10 AA tandem repeats; that stretch reads QWSLTSVETV…KPAPTEAETT (100 aa). Polar residues predominate over residues 236 to 261; sequence LFTTSAATEVPSTEPTTMETASTESN. The N-linked (GlcNAc...) asparagine glycan is linked to N261. The chain crosses the membrane as a helical span at residues 308 to 328; that stretch reads LLIILILASLATIFLVCTVVL. Residues 329 to 397 are Cytoplasmic-facing; that stretch reads AVRLSRKTHM…DDLTLHSFLP (69 aa). Residues 364–390 are disordered; it reads PVTANGGLPKVQDLKTEPSGDRDGDDL. The segment covering 375–390 has biased composition (basic and acidic residues); the sequence is QDLKTEPSGDRDGDDL. Residue T391 is modified to Phosphothreonine. Position 394 is a phosphoserine (S394).

In terms of assembly, homodimer; disulfide-linked. Interacts with P- and E-selectins, through their lectin/EGF domains. Interaction with P-selectin requires sialyl Lewis X glycan modification and tyrosine sulfation, probably on Tyr-54, for high affinity binding. Dimerization appears not to be required for P-selectin/SELP binding. Interacts with SNX20. Interacts with MSN and SYK; mediates SYK activation downstream of SELPLG. Interacts with HAVCR1. Post-translationally, displays complex, core-2, sialylated and fucosylated O-linked oligosaccharides, at least some of which appear to contain poly-N-acetyllactosamine with varying degrees of substitution. Mainly disialylated or neutral forms of the core-2 tetrasaccharide, Galbeta1--&gt;4GlcNAcbeta1--&gt;6(Galbeta1--&gt;3)GalNAcOH. The GlcN:GalN ratio is approximately 2:1 and the Man:Fuc ratio 3:5. Contains about 14% fucose with alpha-1,3 linkage present in two forms: One species is a disialylated, monofucosylated glycan, and the other, a monosialylated, trifucosylated glycan with a polylactosamine backbone. The fucosylated forms carry the Lewis antigen and are important for interaction with selectins and for functioning. No sulfated O-glycans. Some N-glycosylation. Highly expressed in blood, bone marrow, brain, adipose tissue, spleen, and thymus. Also expressed in heart, kidney, liver, muscle, ovary, and stomach.

It is found in the cell membrane. In terms of biological role, a SLe(x)-type proteoglycan, which through high affinity, calcium-dependent interactions with E- and P-selectins, mediates rapid rolling of leukocytes over vascular surfaces during the initial steps in inflammation. Critical for the initial leukocyte capture. This is P-selectin glycoprotein ligand 1 (Selplg) from Mus musculus (Mouse).